The chain runs to 492 residues: MAEDSESAASQQSLELDDQDTCGIDGDNEEENEHMQGSPGGDLGAKKKKKKQKRKKEKPSSGGTKSDSASDSQEIKNPAIPMQKLQDIQRAMELLSTCQGPAKNIDEATKHKYQFWDTQPVPKLNEVVTTHGPIEPDKENIRQEPYSLPQGFMWDTLDLSNAEVLKELYTLLNENYVEDDDNMFRFDYSPNFLKWALRPPGWLPHWHCGVRVSSNKKLVGFISAIPADIHIYDTLKRMVEINFLCVHKKLRSKRVAPVLIREITRRVNLEGIFQAVYTAGVVLPKPVSTCRYWHRSLNPRKLVEVKFSHLSRNMTLQRTMKLYRLPDSTRTPGLRTMGDRDVKQVTALLQKHLSQFHLRPVMGEEEVKHWFLPQENIIDTFVVEGSGGMLTDFISFYTLPSTVMHHPLHKSLKAAYSFYNVHTETPLIDLMNDALILAKLKGFDVFNALDLMDNKNFLEKLKFGIGDGNLQYYLYNWKCPPMDPEKVGLVLQ.

The interval 1-77 (MAEDSESAAS…SASDSQEIKN (77 aa)) is disordered. Acidic residues predominate over residues 15 to 32 (ELDDQDTCGIDGDNEEEN). Residues 46–57 (KKKKKKQKRKKE) are compositionally biased toward basic residues. Residues 61 to 72 (SGGTKSDSASDS) show a composition bias toward polar residues. Tetradecanoyl-CoA is bound by residues H111, W116, L244, V246, S252, R254, V255, and A256.

Belongs to the NMT family.

It localises to the cytoplasm. The protein resides in the membrane. It catalyses the reaction N-terminal glycyl-[protein] + tetradecanoyl-CoA = N-tetradecanoylglycyl-[protein] + CoA + H(+). The catalysed reaction is N-terminal glycyl-L-lysyl-[protein] + tetradecanoyl-CoA = N-terminal glycyl-(N(6)-tetradecanoyl)-L-lysyl-[protein] + CoA + H(+). Adds a myristoyl group to the N-terminal glycine residue of certain cellular and viral proteins. Also able to mediate N-terminal lysine myristoylation of proteins. The sequence is that of Glycylpeptide N-tetradecanoyltransferase 2 from Danio rerio (Zebrafish).